The primary structure comprises 123 residues: Large ribosomal subunit protein uL14 (123 aa).

It belongs to the universal ribosomal protein uL14 family. Part of the 50S ribosomal subunit. Forms a cluster with proteins L3 and L19. In the 70S ribosome, L14 and L19 interact and together make contacts with the 16S rRNA in bridges B5 and B8.

In terms of biological role, binds to 23S rRNA. Forms part of two intersubunit bridges in the 70S ribosome. This Corynebacterium urealyticum (strain ATCC 43042 / DSM 7109) protein is Large ribosomal subunit protein uL14.